The primary structure comprises 80 residues: Defensin-like protein 207 (80 aa).

The signal sequence occupies residues 1-29; it reads MAKNLNSVSFIVLLLVLLVASTEILKSDA. Cystine bridges form between Cys38-Cys64, Cys50-Cys75, and Cys54-Cys77.

The protein belongs to the DEFL family.

The protein localises to the secreted. The chain is Defensin-like protein 207 from Arabidopsis thaliana (Mouse-ear cress).